The sequence spans 100 residues: NADH-quinone oxidoreductase subunit K (100 aa).

3 helical membrane-spanning segments follow: residues 2–22 (IGLSHYLIVSALIFSIGLMGV), 29–49 (LMLFFATEVMLNAVNIAFAAI), and 63–83 (FFIIAIAASEVAVGLGILIVL).

Belongs to the complex I subunit 4L family. In terms of assembly, NDH-1 is composed of 14 different subunits. Subunits NuoA, H, J, K, L, M, N constitute the membrane sector of the complex.

The protein resides in the cell inner membrane. The enzyme catalyses a quinone + NADH + 5 H(+)(in) = a quinol + NAD(+) + 4 H(+)(out). NDH-1 shuttles electrons from NADH, via FMN and iron-sulfur (Fe-S) centers, to quinones in the respiratory chain. The immediate electron acceptor for the enzyme in this species is believed to be ubiquinone. Couples the redox reaction to proton translocation (for every two electrons transferred, four hydrogen ions are translocated across the cytoplasmic membrane), and thus conserves the redox energy in a proton gradient. In Sulfurovum sp. (strain NBC37-1), this protein is NADH-quinone oxidoreductase subunit K.